Consider the following 353-residue polypeptide: Elongation factor Ts (353 aa).

The interval 80 to 83 is involved in Mg(2+) ion dislocation from EF-Tu; that stretch reads TDFV.

This sequence belongs to the EF-Ts family.

The protein resides in the cytoplasm. Functionally, associates with the EF-Tu.GDP complex and induces the exchange of GDP to GTP. It remains bound to the aminoacyl-tRNA.EF-Tu.GTP complex up to the GTP hydrolysis stage on the ribosome. The chain is Elongation factor Ts from Sulfurovum sp. (strain NBC37-1).